The primary structure comprises 304 residues: Aspartate carbamoyltransferase catalytic subunit (304 aa).

2 residues coordinate carbamoyl phosphate: Arg-55 and Thr-56. Lys-83 lines the L-aspartate pocket. The carbamoyl phosphate site is built by Arg-105, His-133, and Gln-136. Residues Arg-166 and Arg-220 each coordinate L-aspartate. Carbamoyl phosphate-binding residues include Gly-261 and Pro-262.

This sequence belongs to the aspartate/ornithine carbamoyltransferase superfamily. ATCase family. As to quaternary structure, heterododecamer (2C3:3R2) of six catalytic PyrB chains organized as two trimers (C3), and six regulatory PyrI chains organized as three dimers (R2).

It catalyses the reaction carbamoyl phosphate + L-aspartate = N-carbamoyl-L-aspartate + phosphate + H(+). It participates in pyrimidine metabolism; UMP biosynthesis via de novo pathway; (S)-dihydroorotate from bicarbonate: step 2/3. Its function is as follows. Catalyzes the condensation of carbamoyl phosphate and aspartate to form carbamoyl aspartate and inorganic phosphate, the committed step in the de novo pyrimidine nucleotide biosynthesis pathway. The chain is Aspartate carbamoyltransferase catalytic subunit from Caldanaerobacter subterraneus subsp. tengcongensis (strain DSM 15242 / JCM 11007 / NBRC 100824 / MB4) (Thermoanaerobacter tengcongensis).